A 193-amino-acid polypeptide reads, in one-letter code: Probable molybdenum cofactor guanylyltransferase (193 aa).

Residues 9-11 (TAG), Lys21, Asp64, and Asp93 each bind GTP. Asp93 provides a ligand contact to Mg(2+).

The protein belongs to the MobA family. Mg(2+) is required as a cofactor.

The protein localises to the cytoplasm. The catalysed reaction is Mo-molybdopterin + GTP + H(+) = Mo-molybdopterin guanine dinucleotide + diphosphate. Transfers a GMP moiety from GTP to Mo-molybdopterin (Mo-MPT) cofactor (Moco or molybdenum cofactor) to form Mo-molybdopterin guanine dinucleotide (Mo-MGD) cofactor. In Deinococcus radiodurans (strain ATCC 13939 / DSM 20539 / JCM 16871 / CCUG 27074 / LMG 4051 / NBRC 15346 / NCIMB 9279 / VKM B-1422 / R1), this protein is Probable molybdenum cofactor guanylyltransferase.